The following is a 438-amino-acid chain: ATP-dependent RNA helicase sub2 (438 aa).

The span at 23–36 (TTAAPAANGAPAKT) shows a compositional bias: low complexity. Residues 23–42 (TTAAPAANGAPAKTGDLTVT) form a disordered region. Positions 58–86 (TGFRDFLLKGELLRAITDCGFEHPSEVCI) match the Q motif motif. Residues 86–261 (IPTAILNVDV…KKFMRNPLEV (176 aa)) enclose the Helicase ATP-binding domain. Residue 99–106 (AKSGLGKT) participates in ATP binding. The short motif at 208–211 (DECD) is the DEAD box element. The Helicase C-terminal domain maps to 289 to 434 (KLNDLLDNLE…EYPEGGVDSS (146 aa)).

Belongs to the DEAD box helicase family. DECD subfamily.

It localises to the nucleus. The catalysed reaction is ATP + H2O = ADP + phosphate + H(+). Functionally, ATP-binding RNA helicase involved in transcription elongation and required for the export of mRNA out of the nucleus. SUB2 also plays a role in pre-mRNA splicing and spliceosome assembly. May be involved in rDNA and telomeric silencing, and maintenance of genome integrity. This chain is ATP-dependent RNA helicase sub2 (sub2), found in Aspergillus terreus (strain NIH 2624 / FGSC A1156).